The chain runs to 67 residues: Large ribosomal subunit protein uL29 (67 aa).

Belongs to the universal ribosomal protein uL29 family.

In Alkaliphilus oremlandii (strain OhILAs) (Clostridium oremlandii (strain OhILAs)), this protein is Large ribosomal subunit protein uL29.